The chain runs to 284 residues: Tetraspanin-10 (284 aa).

Over 1-11 (MGMGTSTFVIR) the chain is Cytoplasmic. A helical transmembrane segment spans residues 12–32 (WVNLLTMLLAVAVIIFGVWMS). Residues 33–43 (THNDGCRRSLT) lie on the Extracellular side of the membrane. A helical membrane pass occupies residues 44-64 (FPVIALGGFIFLISIIGFLGA). Residues 65–75 (CKRSVALLWIY) are Cytoplasmic-facing. The helical transmembrane segment at 76–96 (LAVLLIVLIAILVFTVLAFIV) threads the bilayer. Residues 97 to 228 (TNNGSGHTNP…AGVAQYMKTE (132 aa)) are Extracellular-facing. N-linked (GlcNAc...) asparagine glycosylation is found at N99, N128, and N183. A helical membrane pass occupies residues 229–249 (WRLVAIFNVVLFVVLISSLLS). Topologically, residues 250-284 (TRFDSEQSFGLLNGLVQISNITFKDCQTTTVPKQF) are cytoplasmic.

It belongs to the tetraspanin (TM4SF) family.

The protein localises to the membrane. May be involved in the regulation of cell differentiation. The chain is Tetraspanin-10 (TET10) from Arabidopsis thaliana (Mouse-ear cress).